The chain runs to 143 residues: MLEFDTIKDSKQLNGLALAYIGDAIFEVYVRHHLLKQGFTKPNDLHKKSSRIVSAKSQAEILFFLQNQSFFTEEEEAVLKRGRNAKSGTTPKNTDVQTYRYSTAFEALLGYLFLEKKEERLSQLVAEAIQFGTSGRKTNESAT.

The active site involves Asp23.

This sequence belongs to the MrnC RNase family. As to quaternary structure, homodimer. Requires Mg(2+) as cofactor.

Its subcellular location is the cytoplasm. Its function is as follows. Involved in correct processing of both the 5' and 3' ends of 23S rRNA precursor. Processes 30S rRNA precursor transcript even in absence of ribonuclease 3 (Rnc); Rnc processes 30S rRNA into smaller rRNA precursors. Cleaves more efficiently on assembled 50S ribosomal subunits. Cleavage is strongly stimulated by ribosomal protein L3 (RplC); 20-30% DMSO can replace RplC, suggesting RplC may alter rRNA conformation. The protein is Mini-ribonuclease 3 (mrnC) of Bacillus subtilis (strain 168).